The chain runs to 113 residues: Hydrogenase maturation factor HypA (113 aa).

Residue His-2 coordinates Ni(2+). Cys-73, Cys-76, Cys-89, and Cys-92 together coordinate Zn(2+).

It belongs to the HypA/HybF family.

Functionally, involved in the maturation of [NiFe] hydrogenases. Required for nickel insertion into the metal center of the hydrogenase. In Cereibacter sphaeroides (strain ATCC 17023 / DSM 158 / JCM 6121 / CCUG 31486 / LMG 2827 / NBRC 12203 / NCIMB 8253 / ATH 2.4.1.) (Rhodobacter sphaeroides), this protein is Hydrogenase maturation factor HypA.